The following is a 162-amino-acid chain: Nucleotide-binding protein Franean1_6074 (162 aa).

Belongs to the YajQ family.

Functionally, nucleotide-binding protein. The polypeptide is Nucleotide-binding protein Franean1_6074 (Parafrankia sp. (strain EAN1pec)).